The chain runs to 257 residues: Protein patched homolog 1 (257 aa).

Residues 1 to 199 (AKLQTGTAYL…LDDILKSFSD (199 aa)) lie on the Extracellular side of the membrane. N-linked (GlcNAc...) asparagine glycosylation is found at asparagine 75, asparagine 114, and asparagine 177. Residues 200–220 (ISVIRVASGYLLMLAYACLTM) form a helical membrane-spanning segment. The region spanning 201–257 (SVIRVASGYLLMLAYACLTMLRWDCAKSQGAVGLAGVLLVALSVAAGLGLCSLIGIS) is the SSD domain. Topologically, residues 221 to 235 (LRWDCAKSQGAVGLA) are cytoplasmic. The chain crosses the membrane as a helical span at residues 236 to 256 (GVLLVALSVAAGLGLCSLIGI).

This sequence belongs to the patched family. In terms of processing, glycosylation is necessary for SHH binding. In the eye, detected in neural retina, iris, retinal pigment epithelium, but not in lens.

Its subcellular location is the membrane. Its function is as follows. Acts as a receptor for sonic hedgehog (SHH), indian hedgehog (IHH) and desert hedgehog (DHH). Associates with the smoothened protein (SMO) to transduce the hedgehog's proteins signal. This chain is Protein patched homolog 1 (PTC1), found in Cynops pyrrhogaster (Japanese fire-bellied newt).